A 299-amino-acid chain; its full sequence is MKRLFFIFVMLIVLLCGCTSNKTTNVNNEININKIETNKTLENESLIQKTEKNQLAKIKEIKYMYIVKEGNKTKIQFALAYENGSLARVSNGKVVLKIFDDSGLLFNKTYYINELPLKAGYYYEIELPKIKGFYKNAKFVLTFKNDNVNLSKTTYGTIERYSEEEMKEIFEKEYHENSIKTNIEEFRDVVGIKFTVKEYGYYKIYNNQTDRIEKVFRVDFVAKNLNPDTYEFAPIGVCLISGDKKYWKIGGLDEIEIGINQEIAGYWIFNKPDSIENLRLDFKMGNIVYDIPLTQNNLK.

The chain crosses the membrane as a helical span at residues 4 to 20 (LFFIFVMLIVLLCGCTS).

Its subcellular location is the membrane. This is an uncharacterized protein from Methanocaldococcus jannaschii (strain ATCC 43067 / DSM 2661 / JAL-1 / JCM 10045 / NBRC 100440) (Methanococcus jannaschii).